The sequence spans 233 residues: Small ribosomal subunit protein uS3 (233 aa).

Residues 39-108 form the KH type-2 domain; it reads IRTALFKLLK…KLIVNVRVIE (70 aa).

Belongs to the universal ribosomal protein uS3 family. Part of the 30S ribosomal subunit. Forms a tight complex with proteins S10 and S14.

Functionally, binds the lower part of the 30S subunit head. Binds mRNA in the 70S ribosome, positioning it for translation. This is Small ribosomal subunit protein uS3 from Mycoplasma mycoides subsp. mycoides SC (strain CCUG 32753 / NCTC 10114 / PG1).